Consider the following 584-residue polypeptide: Probable lysosomal cobalamin transporter (584 aa).

10 consecutive transmembrane segments (helical) span residues 8–28, 46–66, 93–113, 144–164, 189–209, 313–333, 350–370, 376–396, 421–441, and 509–529; these read LIWIVYAIVVGILSIVASTFV, IFTLTALLATVLLLPVDVALV, TVVYYFLYSLDAVLCLLIVPF, TLVFILLTIILFLVGFFVPVA, ALTFALGLLIVMGIIVYVIYS, LLGGLLLLAISVMIWISMLLT, ILGKINIINPVNWVLVEAASV, VIFIVLVLHLFTSSVVGIATI, ATVMLTLITLALNYSISMIVV, and GIVDFWAQFVFLGFSLIVLLI.

It belongs to the LIMR family. LMBRD1 subfamily.

It is found in the lysosome membrane. Its function is as follows. Probable lysosomal cobalamin transporter. Required to export cobalamin from lysosomes allowing its conversion to cofactors. This chain is Probable lysosomal cobalamin transporter, found in Coccidioides immitis (strain RS) (Valley fever fungus).